The following is a 342-amino-acid chain: Anthranilate phosphoribosyltransferase (342 aa).

Residues Gly81, 84 to 85 (GD), 91 to 94 (NVSS), 109 to 117 (KHGNRGVSS), and Ser121 contribute to the 5-phospho-alpha-D-ribose 1-diphosphate site. Gly81 is an anthranilate binding site. Ser93 lines the Mg(2+) pocket. Asn112 is a binding site for anthranilate. Anthranilate is bound at residue Arg167. Positions 226 and 227 each coordinate Mg(2+).

Belongs to the anthranilate phosphoribosyltransferase family. As to quaternary structure, homodimer. The cofactor is Mg(2+).

It catalyses the reaction N-(5-phospho-beta-D-ribosyl)anthranilate + diphosphate = 5-phospho-alpha-D-ribose 1-diphosphate + anthranilate. The protein operates within amino-acid biosynthesis; L-tryptophan biosynthesis; L-tryptophan from chorismate: step 2/5. Functionally, catalyzes the transfer of the phosphoribosyl group of 5-phosphorylribose-1-pyrophosphate (PRPP) to anthranilate to yield N-(5'-phosphoribosyl)-anthranilate (PRA). The chain is Anthranilate phosphoribosyltransferase from Marinobacter nauticus (strain ATCC 700491 / DSM 11845 / VT8) (Marinobacter aquaeolei).